The chain runs to 436 residues: Trigger factor (436 aa).

Disordered stretches follow at residues 1-26 (MQVS…RVEN) and 81-100 (QESL…TGEG). Residues 161 to 246 (EDRVVIDFHG…VKRVEEPQLP (86 aa)) enclose the PPIase FKBP-type domain.

Belongs to the FKBP-type PPIase family. Tig subfamily.

It is found in the cytoplasm. It catalyses the reaction [protein]-peptidylproline (omega=180) = [protein]-peptidylproline (omega=0). Its function is as follows. Involved in protein export. Acts as a chaperone by maintaining the newly synthesized protein in an open conformation. Functions as a peptidyl-prolyl cis-trans isomerase. The polypeptide is Trigger factor (Halorhodospira halophila (strain DSM 244 / SL1) (Ectothiorhodospira halophila (strain DSM 244 / SL1))).